A 571-amino-acid polypeptide reads, in one-letter code: Proline--tRNA ligase (571 aa).

Belongs to the class-II aminoacyl-tRNA synthetase family. ProS type 1 subfamily. Homodimer.

It localises to the cytoplasm. It catalyses the reaction tRNA(Pro) + L-proline + ATP = L-prolyl-tRNA(Pro) + AMP + diphosphate. Its function is as follows. Catalyzes the attachment of proline to tRNA(Pro) in a two-step reaction: proline is first activated by ATP to form Pro-AMP and then transferred to the acceptor end of tRNA(Pro). As ProRS can inadvertently accommodate and process non-cognate amino acids such as alanine and cysteine, to avoid such errors it has two additional distinct editing activities against alanine. One activity is designated as 'pretransfer' editing and involves the tRNA(Pro)-independent hydrolysis of activated Ala-AMP. The other activity is designated 'posttransfer' editing and involves deacylation of mischarged Ala-tRNA(Pro). The misacylated Cys-tRNA(Pro) is not edited by ProRS. The protein is Proline--tRNA ligase of Syntrophotalea carbinolica (strain DSM 2380 / NBRC 103641 / GraBd1) (Pelobacter carbinolicus).